Reading from the N-terminus, the 303-residue chain is Quinolinate synthase (303 aa).

Positions 25 and 42 each coordinate iminosuccinate. C87 contacts [4Fe-4S] cluster. Iminosuccinate contacts are provided by residues 113 to 115 (YVN) and S130. Residue C173 coordinates [4Fe-4S] cluster. Iminosuccinate-binding positions include 199 to 201 (HPE) and T216. C261 is a [4Fe-4S] cluster binding site.

This sequence belongs to the quinolinate synthase family. Type 2 subfamily. Requires [4Fe-4S] cluster as cofactor.

The protein resides in the cytoplasm. The catalysed reaction is iminosuccinate + dihydroxyacetone phosphate = quinolinate + phosphate + 2 H2O + H(+). It functions in the pathway cofactor biosynthesis; NAD(+) biosynthesis; quinolinate from iminoaspartate: step 1/1. Catalyzes the condensation of iminoaspartate with dihydroxyacetone phosphate to form quinolinate. The sequence is that of Quinolinate synthase from Desulforudis audaxviator (strain MP104C).